The following is a 236-amino-acid chain: Mediator of RNA polymerase II transcription subunit 20 (236 aa).

Belongs to the Mediator complex subunit 20 family. Component of the Mediator complex.

The protein resides in the nucleus. Component of the Mediator complex, a coactivator involved in the regulated transcription of nearly all RNA polymerase II-dependent genes. Mediator functions as a bridge to convey information from gene-specific regulatory proteins to the basal RNA polymerase II transcription machinery. Mediator is recruited to promoters by direct interactions with regulatory proteins and serves as a scaffold for the assembly of a functional preinitiation complex with RNA polymerase II and the general transcription factors. The polypeptide is Mediator of RNA polymerase II transcription subunit 20 (SRB2) (Debaryomyces hansenii (strain ATCC 36239 / CBS 767 / BCRC 21394 / JCM 1990 / NBRC 0083 / IGC 2968) (Yeast)).